Consider the following 332-residue polypeptide: uncharacterized protein (332 aa).

An N-terminal signal peptide occupies residues 1–32 (MSRDRGARGLRKYGRFALATGAATALSLTASG). C33 is lipidated: N-palmitoyl cysteine. C33 is lipidated: S-diacylglycerol cysteine.

The protein resides in the cell membrane. This is an uncharacterized protein from Streptomyces avermitilis (strain ATCC 31267 / DSM 46492 / JCM 5070 / NBRC 14893 / NCIMB 12804 / NRRL 8165 / MA-4680).